Consider the following 131-residue polypeptide: Large ribosomal subunit protein bL21 (131 aa).

The interval 111–131 (VAAATGTADARRAAHNASAKE) is disordered.

The protein belongs to the bacterial ribosomal protein bL21 family. In terms of assembly, part of the 50S ribosomal subunit. Contacts protein L20.

This protein binds to 23S rRNA in the presence of protein L20. In Cereibacter sphaeroides (strain ATCC 17029 / ATH 2.4.9) (Rhodobacter sphaeroides), this protein is Large ribosomal subunit protein bL21.